Consider the following 103-residue polypeptide: Phospholipase A2 large subunit (103 aa).

Residues tryptophan 7, glycine 9, and glycine 11 each contribute to the Ca(2+) site. 4 cysteine pairs are disulfide-bonded: cysteine 8-cysteine 30, cysteine 29-cysteine 68, cysteine 36-cysteine 61, and cysteine 59-cysteine 96. Asparagine 16 is a glycosylation site (N-linked (GlcNAc...) asparagine). Histidine 33 is an active-site residue. Aspartate 34 serves as a coordination point for Ca(2+).

It belongs to the phospholipase A2 family. Group III subfamily. Heterodimer composed of a large subunit and a small subunit; disulfide-linked. It depends on Ca(2+) as a cofactor. As to expression, expressed by the venom gland.

It localises to the secreted. The enzyme catalyses a 1,2-diacyl-sn-glycero-3-phosphocholine + H2O = a 1-acyl-sn-glycero-3-phosphocholine + a fatty acid + H(+). In terms of biological role, phospholipase toxin, which catalyzes the calcium-dependent hydrolysis of the 2-acyl groups in 3-sn-phosphoglycerides. Inhibits both skeletal (RYR1) and cardiac (RYR2) ryanodine receptors (calcium release channels). Probably blocks ryanodine receptors by generating a lipid product. This is Phospholipase A2 large subunit from Chersonesometrus fulvipes (Indian black scorpion).